We begin with the raw amino-acid sequence, 230 residues long: Ribonuclease 3 (230 aa).

In terms of domain architecture, RNase III spans 10-133 (DPRLLSRIGY…IIGAIYLDSS (124 aa)). Residue Glu46 participates in Mg(2+) binding. The active site involves Asp50. Mg(2+)-binding residues include Asp119 and Glu122. Glu122 is a catalytic residue. Residues 161–230 (DPKSRLQEYL…AAEILKLLEQ (70 aa)) enclose the DRBM domain.

This sequence belongs to the ribonuclease III family. In terms of assembly, homodimer. It depends on Mg(2+) as a cofactor.

It is found in the cytoplasm. It carries out the reaction Endonucleolytic cleavage to 5'-phosphomonoester.. Its function is as follows. Digests double-stranded RNA. Involved in the processing of primary rRNA transcript to yield the immediate precursors to the large and small rRNAs (23S and 16S). Processes some mRNAs, and tRNAs when they are encoded in the rRNA operon. Processes pre-crRNA and tracrRNA of type II CRISPR loci if present in the organism. The polypeptide is Ribonuclease 3 (Acinetobacter baumannii (strain SDF)).